The sequence spans 245 residues: tRNA1(Val) (adenine(37)-N6)-methyltransferase (245 aa).

Belongs to the methyltransferase superfamily. tRNA (adenine-N(6)-)-methyltransferase family.

It is found in the cytoplasm. It carries out the reaction adenosine(37) in tRNA1(Val) + S-adenosyl-L-methionine = N(6)-methyladenosine(37) in tRNA1(Val) + S-adenosyl-L-homocysteine + H(+). Functionally, specifically methylates the adenine in position 37 of tRNA(1)(Val) (anticodon cmo5UAC). The protein is tRNA1(Val) (adenine(37)-N6)-methyltransferase of Salmonella typhi.